The following is a 780-amino-acid chain: ATP-dependent 6-phosphofructokinase, muscle type (780 aa).

T2 carries the N-acetylthreonine modification. The segment at T2 to H390 is N-terminal catalytic PFK domain 1. ATP-binding positions include G25, R88–C89, and G118–S121. D119 contacts Mg(2+). S133 is modified (phosphoserine). Substrate contacts are provided by residues S164–D166, R201, M208–R210, E264, R292, and H298–R301. Residue D166 is the Proton acceptor of the active site. Residue S377 is modified to Phosphoserine. An interdomain linker region spans residues V391–H401. Positions T402–V780 are C-terminal regulatory PFK domain 2. Beta-D-fructose 2,6-bisphosphate-binding positions include R471 and T528–N532. The O-linked (GlcNAc) serine glycan is linked to S530. Residue K557 is modified to N6-(2-hydroxyisobutyryl)lysine. Beta-D-fructose 2,6-bisphosphate contacts are provided by residues R566, M573 to G575, E629, R655, and H661 to Q664. A Phosphoserine modification is found at S667. R735 serves as a coordination point for beta-D-fructose 2,6-bisphosphate. S775 carries the post-translational modification Phosphoserine.

The protein belongs to the phosphofructokinase type A (PFKA) family. ATP-dependent PFK group I subfamily. Eukaryotic two domain clade 'E' sub-subfamily. In terms of assembly, homo- and heterotetramers. Phosphofructokinase (PFK) enzyme functions as a tetramer composed of different combinations of 3 types of subunits, called PFKM (where M stands for Muscle), PFKL (Liver) and PFKP (Platelet). The composition of the PFK tetramer differs according to the tissue type it is present in. In muscles, it is composed of 4 PFKM subunits (also called M4). In the liver, the predominant form is a tetramer of PFKL subunits (L4). In erythrocytes, both PFKM and PFKL subunits randomly tetramerize to form M4, L4 and other combinations (ML3, M2L2, M3L). The kinetic and regulatory properties of the tetrameric enzyme are dependent on the subunit composition, hence can vary across tissues. Interacts (via C-terminus) with HK1 (via N-terminal spermatogenic cell-specific region). Requires Mg(2+) as cofactor. Post-translationally, glcNAcylation decreases enzyme activity.

The protein resides in the cytoplasm. It carries out the reaction beta-D-fructose 6-phosphate + ATP = beta-D-fructose 1,6-bisphosphate + ADP + H(+). The protein operates within carbohydrate degradation; glycolysis; D-glyceraldehyde 3-phosphate and glycerone phosphate from D-glucose: step 3/4. Allosterically activated by ADP, AMP, or fructose 2,6-bisphosphate, and allosterically inhibited by ATP or citrate. Functionally, catalyzes the phosphorylation of D-fructose 6-phosphate to fructose 1,6-bisphosphate by ATP, the first committing step of glycolysis. The chain is ATP-dependent 6-phosphofructokinase, muscle type (PFKM) from Homo sapiens (Human).